Reading from the N-terminus, the 445-residue chain is Methionine aminopeptidase 2-2 (445 aa).

The disordered stretch occupies residues M1–N92. Residues A18–A33 show a composition bias toward low complexity. The segment covering G34–D46 has biased composition (acidic residues). Residues G47–A58 show a composition bias toward low complexity. The segment covering A59–G74 has biased composition (basic residues). H198 contributes to the substrate binding site. Residues D218, D229, and H298 each contribute to the a divalent metal cation site. H306 is a binding site for substrate. A divalent metal cation contacts are provided by E331 and E426.

The protein belongs to the peptidase M24A family. Methionine aminopeptidase eukaryotic type 2 subfamily. The cofactor is Co(2+). Zn(2+) serves as cofactor. Mn(2+) is required as a cofactor. It depends on Fe(2+) as a cofactor.

It localises to the cytoplasm. The enzyme catalyses Release of N-terminal amino acids, preferentially methionine, from peptides and arylamides.. Its function is as follows. Cotranslationally removes the N-terminal methionine from nascent proteins. The N-terminal methionine is often cleaved when the second residue in the primary sequence is small and uncharged (Met-Ala-, Cys, Gly, Pro, Ser, Thr, or Val). The chain is Methionine aminopeptidase 2-2 from Aspergillus terreus (strain NIH 2624 / FGSC A1156).